The following is a 224-amino-acid chain: uncharacterized protein (224 aa).

Its subcellular location is the virion. This is an uncharacterized protein from Acanthamoeba polyphaga mimivirus (APMV).